A 126-amino-acid polypeptide reads, in one-letter code: Large ribosomal subunit protein eL14 (126 aa).

This sequence belongs to the eukaryotic ribosomal protein eL14 family.

The sequence is that of Large ribosomal subunit protein eL14 (RPL14) from Tetrahymena thermophila (strain SB210).